The primary structure comprises 320 residues: Acetyl-coenzyme A carboxylase carboxyl transferase subunit beta (320 aa).

The region spanning 25–294 (LWRKCPECGT…AIVGDLPAPD (270 aa)) is the CoA carboxyltransferase N-terminal domain. C29, C32, C48, and C51 together coordinate Zn(2+). The C4-type zinc finger occupies 29 to 51 (CPECGTMLFHRELSDNLFVCISC). The disordered stretch occupies residues 290 to 320 (LPAPDPAPATPEPQKAAPSAPAQDKPGAGRS).

The protein belongs to the AccD/PCCB family. In terms of assembly, acetyl-CoA carboxylase is a heterohexamer composed of biotin carboxyl carrier protein (AccB), biotin carboxylase (AccC) and two subunits each of ACCase subunit alpha (AccA) and ACCase subunit beta (AccD). The cofactor is Zn(2+).

The protein resides in the cytoplasm. It catalyses the reaction N(6)-carboxybiotinyl-L-lysyl-[protein] + acetyl-CoA = N(6)-biotinyl-L-lysyl-[protein] + malonyl-CoA. It functions in the pathway lipid metabolism; malonyl-CoA biosynthesis; malonyl-CoA from acetyl-CoA: step 1/1. In terms of biological role, component of the acetyl coenzyme A carboxylase (ACC) complex. Biotin carboxylase (BC) catalyzes the carboxylation of biotin on its carrier protein (BCCP) and then the CO(2) group is transferred by the transcarboxylase to acetyl-CoA to form malonyl-CoA. In Dinoroseobacter shibae (strain DSM 16493 / NCIMB 14021 / DFL 12), this protein is Acetyl-coenzyme A carboxylase carboxyl transferase subunit beta.